A 315-amino-acid chain; its full sequence is Small ribosomal subunit biogenesis GTPase RsgA (315 aa).

Residues 79-243 form the CP-type G domain; the sequence is LSKESHILGA…LIDTPGIKGF (165 aa). Residues 128–131 and 182–190 each bind GTP; these read NKID and GHSGVGKSS. 4 residues coordinate Zn(2+): Cys267, Cys272, His274, and Cys280.

The protein belongs to the TRAFAC class YlqF/YawG GTPase family. RsgA subfamily. Monomer. Associates with 30S ribosomal subunit, binds 16S rRNA. The cofactor is Zn(2+).

The protein resides in the cytoplasm. Functionally, one of several proteins that assist in the late maturation steps of the functional core of the 30S ribosomal subunit. Helps release RbfA from mature subunits. May play a role in the assembly of ribosomal proteins into the subunit. Circularly permuted GTPase that catalyzes slow GTP hydrolysis, GTPase activity is stimulated by the 30S ribosomal subunit. The polypeptide is Small ribosomal subunit biogenesis GTPase RsgA (Porphyromonas gingivalis (strain ATCC 33277 / DSM 20709 / CIP 103683 / JCM 12257 / NCTC 11834 / 2561)).